Reading from the N-terminus, the 396-residue chain is Elongation factor Tu 2 (396 aa).

A tr-type G domain is found at 10–206 (KPHVNIGTIG…AVDEYIPTPE (197 aa)). The segment at 19–26 (GHVDHGKT) is G1. 19–26 (GHVDHGKT) is a binding site for GTP. A Mg(2+)-binding site is contributed by threonine 26. The interval 60–64 (GITIN) is G2. A G3 region spans residues 81–84 (DCPG). GTP is bound by residues 81–85 (DCPGH) and 136–139 (NKVD). Positions 136–139 (NKVD) are G4. The interval 174–176 (SAL) is G5.

Belongs to the TRAFAC class translation factor GTPase superfamily. Classic translation factor GTPase family. EF-Tu/EF-1A subfamily. As to quaternary structure, monomer.

The protein resides in the cytoplasm. The catalysed reaction is GTP + H2O = GDP + phosphate + H(+). Its function is as follows. GTP hydrolase that promotes the GTP-dependent binding of aminoacyl-tRNA to the A-site of ribosomes during protein biosynthesis. The polypeptide is Elongation factor Tu 2 (Hyphomonas neptunium (strain ATCC 15444)).